The sequence spans 651 residues: Protein SCARECROW 1 (651 aa).

Disordered stretches follow at residues 1 to 33 and 188 to 277; these read MGSS…ITSL and SDPA…KQRD. A compositionally biased stretch (pro residues) spans 190 to 228; sequence PAPPPPPPPSHPALLPPDATAPPPPPTSVAALPPPPPPQ. Residues 253–280 are a coiled coil; that stretch reads TAEETAAAAAAAKERKEEQRRKQRDEEG. Low complexity predominate over residues 254-263; the sequence is AEETAAAAAA. Positions 264-277 are enriched in basic and acidic residues; sequence AKERKEEQRRKQRD. Residues 274–644 form the GRAS domain; that stretch reads KQRDEEGLHL…LCLLTASAWR (371 aa). The interval 281-345 is leucine repeat I (LRI); the sequence is LHLLTLLLQC…VSSCLGLYAP (65 aa). The short motif at 288-292 is the LxCxE motif element; that stretch reads LQCAE. Residues 364-429 are VHIID; sequence FQVFNGISPF…GGPPRVRLTG (66 aa). A VHIID motif is present at residues 395–399; the sequence is VHIID. The segment at 439-471 is leucine repeat II (LRII); sequence ATGKRLSDFADTLGLPFEFCPVADKAGNLDPEK. Residues 480–567 form a PFYRE region; that stretch reads VAVHWLRHSL…QQLLSREIRN (88 aa). The tract at residues 570–644 is SAW; the sequence is AVGGPARTGD…LCLLTASAWR (75 aa).

The protein belongs to the GRAS family. In terms of assembly, interacts with SHR1, but not with SHR2. As to expression, expressed in the initial daughter cell before its asymmetric division and remains expressed in the endodermal cell layer after the division.

It is found in the nucleus. Functionally, transcription factor required for quiescent center cells specification and maintenance of surrounding stem cells, and for the asymmetric cell division involved in radial pattern formation in roots. Essential for cell division but not differentiation of the ground tissue. Regulates the radial organization of the shoot axial organs. Restricts SHR movment and sequesters it into the nucleus of the endodermis. This chain is Protein SCARECROW 1 (SCR1), found in Oryza sativa subsp. japonica (Rice).